The following is a 282-amino-acid chain: DNA processing protein DprA (282 aa).

The protein belongs to the DprA/Smf family. Homodimer; forms tail-to-tail dimers, forms nucleoprotein complex (NPC) which requires at least 30 nucleotides (nt) of ssDNA becoming optimal with 50 nt. Interacts with RecA, forms mixed DprA-RecA-ssDNA filaments. Interacts with ComFA and ComFC.

Its subcellular location is the cytoplasm. Protein that helps load RecA onto ssDNA during transformation. Required for DNA transformation. Not required for DNA uptake but for a later stage of transformation. Thought to interact at the cell pole with newly imported transforming ssDNA which it binds cooperatively, protecting linear and circular ssDNA from nuclease action. Forms bridges between DNA segments. Favors the loading of RecA onto ssDNA and formation of RecA-DNA filaments, triggering RecA-catalysis of ATP-driven homologous DNA pairing. In Streptococcus pneumoniae (strain ATCC BAA-255 / R6), this protein is DNA processing protein DprA.